The sequence spans 418 residues: Serine hydroxymethyltransferase (418 aa).

(6S)-5,6,7,8-tetrahydrofolate contacts are provided by residues Leu121 and 125-127; that span reads GHL. The residue at position 230 (Lys230) is an N6-(pyridoxal phosphate)lysine. Position 355–357 (355–357) interacts with (6S)-5,6,7,8-tetrahydrofolate; that stretch reads SPF.

The protein belongs to the SHMT family. Homodimer. The cofactor is pyridoxal 5'-phosphate.

It is found in the cytoplasm. The catalysed reaction is (6R)-5,10-methylene-5,6,7,8-tetrahydrofolate + glycine + H2O = (6S)-5,6,7,8-tetrahydrofolate + L-serine. It functions in the pathway one-carbon metabolism; tetrahydrofolate interconversion. It participates in amino-acid biosynthesis; glycine biosynthesis; glycine from L-serine: step 1/1. In terms of biological role, catalyzes the reversible interconversion of serine and glycine with tetrahydrofolate (THF) serving as the one-carbon carrier. This reaction serves as the major source of one-carbon groups required for the biosynthesis of purines, thymidylate, methionine, and other important biomolecules. Also exhibits THF-independent aldolase activity toward beta-hydroxyamino acids, producing glycine and aldehydes, via a retro-aldol mechanism. The polypeptide is Serine hydroxymethyltransferase (Streptococcus pyogenes serotype M1).